The primary structure comprises 192 residues: uncharacterized protein (192 aa).

This is an uncharacterized protein from Sinorhizobium fredii (strain NBRC 101917 / NGR234).